The following is a 439-amino-acid chain: GTPase Der (439 aa).

2 EngA-type G domains span residues P2–G167 and I182–H358. GTP-binding positions include G8 to S15, D55 to I59, N118 to E121, G188 to S195, D235 to L239, and N301 to D304. The 81-residue stretch at Y359–H439 folds into the KH-like domain.

Belongs to the TRAFAC class TrmE-Era-EngA-EngB-Septin-like GTPase superfamily. EngA (Der) GTPase family. Associates with the 50S ribosomal subunit.

Functionally, GTPase that plays an essential role in the late steps of ribosome biogenesis. This chain is GTPase Der, found in Thermosipho africanus (strain TCF52B).